Reading from the N-terminus, the 224-residue chain is Ribose-5-phosphate isomerase A (224 aa).

Residues 32–35 (TGST), 85–88 (DGAD), and 98–101 (KGGG) each bind substrate. The Proton acceptor role is filled by glutamate 107. Lysine 125 contributes to the substrate binding site.

This sequence belongs to the ribose 5-phosphate isomerase family. Homodimer.

It carries out the reaction aldehydo-D-ribose 5-phosphate = D-ribulose 5-phosphate. The protein operates within carbohydrate degradation; pentose phosphate pathway; D-ribose 5-phosphate from D-ribulose 5-phosphate (non-oxidative stage): step 1/1. In terms of biological role, catalyzes the reversible conversion of ribose-5-phosphate to ribulose 5-phosphate. This Pseudomonas fluorescens (strain Pf0-1) protein is Ribose-5-phosphate isomerase A.